A 511-amino-acid chain; its full sequence is Glucans biosynthesis protein G (511 aa).

A signal peptide spans 1–22; it reads MMKMRWLGAAIMLTLYASSSWA.

It belongs to the OpgD/OpgG family.

It is found in the periplasm. The protein operates within glycan metabolism; osmoregulated periplasmic glucan (OPG) biosynthesis. In terms of biological role, involved in the biosynthesis of osmoregulated periplasmic glucans (OPGs). The protein is Glucans biosynthesis protein G of Salmonella enteritidis PT4 (strain P125109).